Consider the following 156-residue polypeptide: Putative pre-16S rRNA nuclease (156 aa).

It belongs to the YqgF nuclease family.

Its subcellular location is the cytoplasm. Functionally, could be a nuclease involved in processing of the 5'-end of pre-16S rRNA. The polypeptide is Putative pre-16S rRNA nuclease (Streptomyces avermitilis (strain ATCC 31267 / DSM 46492 / JCM 5070 / NBRC 14893 / NCIMB 12804 / NRRL 8165 / MA-4680)).